The following is a 696-amino-acid chain: Translation factor waclaw, mitochondrial (696 aa).

A mitochondrion-targeting transit peptide spans 1 to 76 (MIVGYSVFFH…RNLSTTNQVK (76 aa)). Residues 97–278 (ERIRNFSIIA…RVIETVPPPQ (182 aa)) enclose the tr-type G domain. Residues 106-113 (AHVDHGKS), 171-175 (DTPGH), and 225-228 (NKID) each bind GTP.

This sequence belongs to the TRAFAC class translation factor GTPase superfamily. Classic translation factor GTPase family. LepA subfamily.

It localises to the mitochondrion inner membrane. It catalyses the reaction GTP + H2O = GDP + phosphate + H(+). Promotes mitochondrial protein synthesis. May act as a fidelity factor of the translation reaction, by catalyzing a one-codon backward translocation of tRNAs on improperly translocated ribosomes. Binds to mitochondrial ribosomes in a GTP-dependent manner. This chain is Translation factor waclaw, mitochondrial, found in Drosophila melanogaster (Fruit fly).